The chain runs to 310 residues: Ribosomal RNA small subunit methyltransferase H (310 aa).

Residues 32-34, Asp-52, Phe-79, Asp-100, and Gln-107 each bind S-adenosyl-L-methionine; that span reads GGH.

The protein belongs to the methyltransferase superfamily. RsmH family.

It localises to the cytoplasm. It catalyses the reaction cytidine(1402) in 16S rRNA + S-adenosyl-L-methionine = N(4)-methylcytidine(1402) in 16S rRNA + S-adenosyl-L-homocysteine + H(+). In terms of biological role, specifically methylates the N4 position of cytidine in position 1402 (C1402) of 16S rRNA. The polypeptide is Ribosomal RNA small subunit methyltransferase H (Bacillus cereus (strain B4264)).